Here is a 209-residue protein sequence, read N- to C-terminus: PF03932 family protein CutC (209 aa).

Belongs to the CutC family.

It localises to the cytoplasm. In terms of biological role, might participate in the control of copper homeostasis; data from other bacteria suggests it is not involved. The chain is PF03932 family protein CutC from Enterococcus faecalis (strain ATCC 700802 / V583).